A 218-amino-acid chain; its full sequence is Phosphoenolpyruvate guanylyltransferase (218 aa).

Residues threonine 151, glycine 166, and serine 169 each contribute to the phosphoenolpyruvate site.

It belongs to the CofC family.

It carries out the reaction phosphoenolpyruvate + GTP + H(+) = enolpyruvoyl-2-diphospho-5'-guanosine + diphosphate. The protein operates within cofactor biosynthesis; coenzyme F420 biosynthesis. Its function is as follows. Guanylyltransferase that catalyzes the activation of phosphoenolpyruvate (PEP) as enolpyruvoyl-2-diphospho-5'-guanosine, via the condensation of PEP with GTP. It is involved in the biosynthesis of coenzyme F420, a hydride carrier cofactor. This chain is Phosphoenolpyruvate guanylyltransferase, found in Mycobacterium sp. (strain KMS).